The chain runs to 404 residues: Argininosuccinate synthase (404 aa).

Position 15-23 (Ala15–Ser23) interacts with ATP. Position 94 (Tyr94) interacts with L-citrulline. Gly124 serves as a coordination point for ATP. Positions 126, 130, and 131 each coordinate L-aspartate. Asn130 lines the L-citrulline pocket. 4 residues coordinate L-citrulline: Arg134, Ser182, Glu266, and Tyr278.

Belongs to the argininosuccinate synthase family. Type 1 subfamily. In terms of assembly, homotetramer.

The protein localises to the cytoplasm. It carries out the reaction L-citrulline + L-aspartate + ATP = 2-(N(omega)-L-arginino)succinate + AMP + diphosphate + H(+). The protein operates within amino-acid biosynthesis; L-arginine biosynthesis; L-arginine from L-ornithine and carbamoyl phosphate: step 2/3. The chain is Argininosuccinate synthase from Streptomyces avermitilis (strain ATCC 31267 / DSM 46492 / JCM 5070 / NBRC 14893 / NCIMB 12804 / NRRL 8165 / MA-4680).